We begin with the raw amino-acid sequence, 483 residues long: MAQADIALIGLAVMGQNLILNMNDHGFVVCAFNRTVSKVDDFLANEAKGTKVVGAQSLKEMVSKLKKPRRIILLVKAGQAVDDFIEKLVPLLDTGDIIIDGGNSEYRDTTRRCRDLKAKGILFVGSGVSGGEEGARYGPSLMPGGNKEAWPHIKTIFQGIAAKVGTGEPCCDWVGDEGAGHFVKMVHNGIEYGDMQLICEAYHLMKDVLGMAQDEMAQAFEDWNKTELDSFLIEITANILKFQDTDGKHLLPKIRDSAGQKGTGKWTAISALEYGVPVTLIGEAVFARCLSSLKDERIQASKKLKGPQKFQFDGDKKSFLEDIRKALYASKIISYAQGFMLLRQAATEFGWTLNYGGIALMWRGGCIIRSVFLGKIKDAFDRNPELQNLLLDDFFKSAVENCQDSWRRAVSTGVQAGIPMPCFTTALSFYDGYRHEMLPASLIQAQRDYFGAHTYELLAKPGQFIHTNWTGHGGTVSSSSYNA.

NADP(+) contacts are provided by residues 10–15 and 33–35; these read GLAVMG and NRT. Residue lysine 38 is modified to N6-acetyllysine. Serine 57 carries the phosphoserine modification. Lysine 59 bears the N6-acetyllysine mark. NADP(+) is bound by residues 75–77 and asparagine 103; that span reads VKA. Residues asparagine 103 and 129–131 each bind substrate; that span reads SGG. Serine 129 is modified (phosphoserine). The active-site Proton acceptor is the lysine 184. Substrate is bound at residue 187 to 188; that stretch reads HN. The Proton donor role is filled by glutamate 191. 3 residues coordinate substrate: tyrosine 192, lysine 261, and arginine 288. Position 309 is an N6-acetyllysine (lysine 309). Residues arginine 447 and histidine 453 each coordinate substrate. 478–481 provides a ligand contact to NADP(+); the sequence is SSSY.

It belongs to the 6-phosphogluconate dehydrogenase family. In terms of assembly, homodimer.

The protein resides in the cytoplasm. It catalyses the reaction 6-phospho-D-gluconate + NADP(+) = D-ribulose 5-phosphate + CO2 + NADPH. It participates in carbohydrate degradation; pentose phosphate pathway; D-ribulose 5-phosphate from D-glucose 6-phosphate (oxidative stage): step 3/3. Catalyzes the oxidative decarboxylation of 6-phosphogluconate to ribulose 5-phosphate and CO(2), with concomitant reduction of NADP to NADPH. The polypeptide is 6-phosphogluconate dehydrogenase, decarboxylating (PGD) (Homo sapiens (Human)).